Here is a 193-residue protein sequence, read N- to C-terminus: Phosphoheptose isomerase (193 aa).

The region spanning 37 to 193 (LADSFKVGGK…QLIEKEMVKA (157 aa)) is the SIS domain. A substrate-binding site is contributed by 52–54 (NGG). The Zn(2+) site is built by His61 and Glu65. Substrate is bound by residues Glu65, 93 to 94 (ND), 119 to 121 (STS), Ser124, and Gln172. Zn(2+) is bound by residues Gln172 and His180.

Belongs to the SIS family. GmhA subfamily. In terms of assembly, homotetramer. Requires Zn(2+) as cofactor.

The protein localises to the cytoplasm. The catalysed reaction is 2 D-sedoheptulose 7-phosphate = D-glycero-alpha-D-manno-heptose 7-phosphate + D-glycero-beta-D-manno-heptose 7-phosphate. The protein operates within carbohydrate biosynthesis; D-glycero-D-manno-heptose 7-phosphate biosynthesis; D-glycero-alpha-D-manno-heptose 7-phosphate and D-glycero-beta-D-manno-heptose 7-phosphate from sedoheptulose 7-phosphate: step 1/1. Its pathway is bacterial outer membrane biogenesis; LPS core biosynthesis. Functionally, catalyzes the isomerization of sedoheptulose 7-phosphate in D-glycero-D-manno-heptose 7-phosphate. The chain is Phosphoheptose isomerase from Photorhabdus laumondii subsp. laumondii (strain DSM 15139 / CIP 105565 / TT01) (Photorhabdus luminescens subsp. laumondii).